A 211-amino-acid chain; its full sequence is SOSS complex subunit B2 (211 aa).

A DNA-binding region (OB) is located at residues 27–97; it reads IVLEIGRVTK…TLYTGRGGDL (71 aa). The interval 125-211 is disordered; sequence NQQNKTSKEQ…GRDPRRASKR (87 aa). Over residues 136–157 the composition is skewed to polar residues; sequence GNSPPNQNAGNGTVPVFSNNNA. The span at 179 to 195 shows a compositional bias: pro residues; it reads NGPPPVTAGGTPAPPKP.

It belongs to the SOSS-B family. SOSS-B2 subfamily. As to quaternary structure, component of the SOSS complex, composed of soss-b (soss-b1/nabp2 or soss-b2/nabp1), soss-a/ints3 and soss-c/inip. SOSS complexes containing soss-b1/nabp2 are more abundant than complexes containing soss-b2/nabp1.

The protein localises to the nucleus. Its function is as follows. Component of the SOSS complex, a multiprotein complex that functions downstream of the MRN complex to promote DNA repair and G2/M checkpoint. In the SOSS complex, acts as a sensor of single-stranded DNA that binds to single-stranded DNA. The SOSS complex associates with DNA lesions and influences diverse endpoints in the cellular DNA damage response including cell-cycle checkpoint activation, recombinational repair and maintenance of genomic stability. Required for efficient homologous recombination-dependent repair of double-strand breaks (DSBs). This chain is SOSS complex subunit B2 (nabp1), found in Danio rerio (Zebrafish).